The primary structure comprises 226 residues: Urease accessory protein UreF (226 aa).

The protein belongs to the UreF family. In terms of assembly, ureD, UreF and UreG form a complex that acts as a GTP-hydrolysis-dependent molecular chaperone, activating the urease apoprotein by helping to assemble the nickel containing metallocenter of UreC. The UreE protein probably delivers the nickel.

Its subcellular location is the cytoplasm. In terms of biological role, required for maturation of urease via the functional incorporation of the urease nickel metallocenter. The protein is Urease accessory protein UreF of Burkholderia cenocepacia (strain HI2424).